Reading from the N-terminus, the 747-residue chain is Probable cyclic nucleotide-gated ion channel 6 (747 aa).

Residues 1–117 lie on the Cytoplasmic side of the membrane; sequence MFDTCGPKGV…DKFLLLCNKL (117 aa). A helical transmembrane segment spans residues 118–138; that stretch reads FVASCILAVSVDPLFLYLPFI. The Extracellular segment spans residues 139 to 150; the sequence is NDKAKCVGIDRK. A helical transmembrane segment spans residues 151 to 171; that stretch reads LAIIVTTIRTVIDSFYLFHMA. Over 172–205 the chain is Cytoplasmic; sequence LRFRTAYVAPSSRVFGRGELVIDPAQIAKRYLQQ. A helical membrane pass occupies residues 206–226; the sequence is YFIIDLLSVLPVPQIIVWRFL. Residues 227-239 are Extracellular-facing; it reads YTSRGANVLATKQ. A helical transmembrane segment spans residues 240 to 260; it reads ALRYIVLVQYIPRFLRMYPLS. Topologically, residues 261–280 are cytoplasmic; the sequence is SELKRTAGVFAETAWAGAAY. A helical membrane pass occupies residues 281 to 301; it reads YLLLYMLASHIVGALWYLLAL. Over 302–407 the chain is Extracellular; sequence ERNNDCWSKA…GQGLETSTYP (106 aa). Residues 408 to 428 form a helical membrane-spanning segment; sequence GEVIFSITLAIAGLLLFALLI. The Cytoplasmic portion of the chain corresponds to 429-747; that stretch reads GNMQTYLQSL…PEPDFSAEDH (319 aa). A nucleoside 3',5'-cyclic phosphate is bound by residues 514–638 and aspartate 585; that span reads LFEN…SRQV. Residues 630–645 form a calmodulin-binding region; the sequence is FRRLHSRQVQHTFRFY. The 30-residue stretch at 650–679 folds into the IQ domain; that stretch reads RTWAACFMQAAWRRYIKRKKLEQLRKEEEE.

This sequence belongs to the cyclic nucleotide-gated cation channel (TC 1.A.1.5) family. In terms of assembly, homotetramer or heterotetramer.

It localises to the cell membrane. Functionally, probable cyclic nucleotide-gated ion channel. The sequence is that of Probable cyclic nucleotide-gated ion channel 6 (CNGC6) from Arabidopsis thaliana (Mouse-ear cress).